The following is a 270-amino-acid chain: Mevalonyl-coenzyme A hydratase sidH (270 aa).

The PTS1-type peroxisomal targeting signal motif lies at Ser268 to Leu270.

Belongs to the enoyl-CoA hydratase/isomerase family.

It localises to the peroxisome. The protein operates within siderophore biosynthesis. Mevalonyl-coenzyme A hydratase; part of the siderophore biosynthetic pathway. Aspergillus fumigatus produces 4 types of siderophores, low-molecular-mass iron chelators, including excreted fusarinine C (FsC) and triacetylfusarinine C (TAFC) for iron uptake and intacellular ferricrocin (FC) for hyphal and hydroxyferricrocin (HFC) for conidial iron distribution and storage. TAFC consists of 3 N(2)-acetyl-N(5)-anhydromevalonyl-N(5)-hydroxyornithine residues cyclically linked by ester bonds; FC is a cyclic hexapeptide with the structure Gly-Ser-Gly-(N(5)-acetyl-N(5)-hydroxyornithine)x3. The biosynthesis of all four siderophores depends on the hydroxylation of ornithine, catalyzed by the monooxygenase sidA. Subsequently, the pathways for biosynthesis of extra- and intracellular siderophores split. For biosynthesis of extracellular siderophores, the transacylase sidF transfers anhydromevalonyl to N(5)-hydroxyornithine. The required anhydromevalonyl-CoA moiety is derived from mevalonate by CoA ligation and dehydration catalyzed by sidI and sidH respectively. The acetylation of N(5)-hydroxyornithine for FC biosynthesis involves the constitutively expressed sidL. FC is hydroxylated to HFC by an as yet uncharacterized enzyme during conidiation. Assembly of fusarinine C (FsC) and FC is catalyzed by two different nonribosomal peptide synthetases (NRPS), sidD and sidC respectively. Subsequently, sidG catalyzes N2-acetylation of FsC for forming TAFC. Both extra- and intracellular siderophores are crucial for growth during iron limitation and virulence. This Aspergillus fumigatus (strain ATCC MYA-4609 / CBS 101355 / FGSC A1100 / Af293) (Neosartorya fumigata) protein is Mevalonyl-coenzyme A hydratase sidH.